The following is a 286-amino-acid chain: Large ribosomal subunit protein uL2 (286 aa).

Disordered regions lie at residues 22–59 (KELT…GGGH) and 215–286 (LGRR…KLHK). Positions 230-240 (DHPHGGGEGRT) are enriched in basic and acidic residues. The span at 255–286 (KGGRTRQKRKPSNSSIVRRRKSRRYGQLKLHK) shows a compositional bias: basic residues.

This sequence belongs to the universal ribosomal protein uL2 family. As to quaternary structure, part of the 50S ribosomal subunit. Forms a bridge to the 30S subunit in the 70S ribosome.

In terms of biological role, one of the primary rRNA binding proteins. Required for association of the 30S and 50S subunits to form the 70S ribosome, for tRNA binding and peptide bond formation. It has been suggested to have peptidyltransferase activity; this is somewhat controversial. Makes several contacts with the 16S rRNA in the 70S ribosome. The chain is Large ribosomal subunit protein uL2 from Rhodopirellula baltica (strain DSM 10527 / NCIMB 13988 / SH1).